The primary structure comprises 438 residues: MVDYQGKKVVIIGLGLTGLSCVDFFIARGVTPRVMDTRINPPGLDQLPESVEQHVGDLNQEWLLDADLIVVSPGMALAHPALSEAAEAGVEIIGDIELFCRENQAPVVAITGSNGKSTVTTLVGEMAKAAGWSVGVGGNIGVPALTLLKQDNQLTVLELSSFQLETTHSLRASAATILNVTEDHTDRYPLGLQQYRAAKLRVYENAKVCIVNADDALTMPVRGADSRCISFGVDVGDYHLNKQQGEIWLRVRGEKVLNTREMKLSGRHNYTNALAALALADAVGIPRASSLKALTTFSGLPHRFQLVLERHGVRWINDSKATNVGSTEAALDGLQVDGTLHLLLGGDGKSADFSGLTRFLQGDRIKVYCFGRDGGQLAALRPDVSQLTETMAQAMALVAKVVLPGDRVLLSPACASLDQFRSFEHRGNEFARLAEELG.

112-118 (GSNGKST) serves as a coordination point for ATP.

It belongs to the MurCDEF family.

It is found in the cytoplasm. The enzyme catalyses UDP-N-acetyl-alpha-D-muramoyl-L-alanine + D-glutamate + ATP = UDP-N-acetyl-alpha-D-muramoyl-L-alanyl-D-glutamate + ADP + phosphate + H(+). Its pathway is cell wall biogenesis; peptidoglycan biosynthesis. Its function is as follows. Cell wall formation. Catalyzes the addition of glutamate to the nucleotide precursor UDP-N-acetylmuramoyl-L-alanine (UMA). The polypeptide is UDP-N-acetylmuramoylalanine--D-glutamate ligase (Yersinia pseudotuberculosis serotype I (strain IP32953)).